We begin with the raw amino-acid sequence, 222 residues long: MSATPRVRVLEIFASLQGEGINLGRPAVFVRLAGCPIRCIYCDTKYSWDFNAGVEMGVEEIVAKALALSVVGHVVVTGGEPLIWQRRGLEELACALRALGSVEVETSGAYPPTPELDRCVDFYDVSPKLSNAGVKAPFSPFYASSPKAWFKFVVSNADDVEEVERFVVAYGIPRGRVFLMPMAESPEEHGEALRRIWDAAVRGGFRVTPRLHIMAWGNARGK.

Residues 16-18 (LQG) and R31 contribute to the substrate site. One can recognise a Radical SAM core domain in the interval 22 to 222 (NLGRPAVFVR…IMAWGNARGK (201 aa)). Positions 35, 39, and 42 each coordinate [4Fe-4S] cluster. T44 serves as a coordination point for Mg(2+). T77 contributes to the substrate binding site. Residues G79 and 126-128 (SPK) each bind S-adenosyl-L-methionine.

This sequence belongs to the radical SAM superfamily. 7-carboxy-7-deazaguanine synthase family. In terms of assembly, homodimer. It depends on [4Fe-4S] cluster as a cofactor. S-adenosyl-L-methionine is required as a cofactor. Mg(2+) serves as cofactor.

It catalyses the reaction 6-carboxy-5,6,7,8-tetrahydropterin + H(+) = 7-carboxy-7-deazaguanine + NH4(+). Its pathway is purine metabolism; 7-cyano-7-deazaguanine biosynthesis. In terms of biological role, catalyzes the complex heterocyclic radical-mediated conversion of 6-carboxy-5,6,7,8-tetrahydropterin (CPH4) to 7-carboxy-7-deazaguanine (CDG), a step common to the biosynthetic pathways of all 7-deazapurine-containing compounds. The protein is 7-carboxy-7-deazaguanine synthase of Pyrobaculum aerophilum (strain ATCC 51768 / DSM 7523 / JCM 9630 / CIP 104966 / NBRC 100827 / IM2).